A 68-amino-acid chain; its full sequence is SERF-like protein YDL085C-A (68 aa).

Composition is skewed to basic and acidic residues over residues 1–43 and 50–68; these read MARG…EILR and DARR…KTRR. Positions 1–68 are disordered; sequence MARGNQRDLA…EKLKAEKTRR (68 aa). Ser-37 bears the Phosphoserine mark.

This sequence belongs to the SERF family.

The protein resides in the cytoplasm. Its subcellular location is the nucleus. The protein is SERF-like protein YDL085C-A of Saccharomyces cerevisiae (strain ATCC 204508 / S288c) (Baker's yeast).